We begin with the raw amino-acid sequence, 707 residues long: Bone morphogenetic protein 1 (707 aa).

The tract at residues 57–90 (SGAATNISRPEKGRRTRKERRRSREKRASTSRPE) is disordered. An N-linked (GlcNAc...) asparagine glycan is attached at N62. Over residues 68-81 (KGRRTRKERRRSRE) the composition is skewed to basic residues. In terms of domain architecture, Peptidase M12A spans 84–283 (ASTSRPERVW…AQARKLYKCP (200 aa)). An N-linked (GlcNAc...) asparagine glycan is attached at N105. 4 disulfide bridges follow: C126–C282, C146–C168, C148–C149, and C285–C311. Residue H176 coordinates Zn(2+). E177 is an active-site residue. Residues H180 and H186 each coordinate Zn(2+). CUB domains follow at residues 285-397 (CGET…YEAL) and 398-509 (CGGE…NYFK). Residues N295 and N326 are each glycosylated (N-linked (GlcNAc...) asparagine). 8 disulfides stabilise this stretch: C338–C360, C398–C424, C451–C473, C514–C526, C522–C535, C537–C550, C554–C580, and C607–C629. The EGF-like; calcium-binding domain maps to 510–551 (EVDECSRPNNGGCEQRCVNTLGSYKCACDPGYELGQDKKSCE). In terms of domain architecture, CUB 3 spans 554–666 (CGGFLTKLNG…KGFQANFFSE (113 aa)). N-linked (GlcNAc...) asparagine glycosylation occurs at N562. Residues 682 to 707 (RGQQNQAPKRVRPRMRLRTVKKTRPP) are disordered. Residues 690 to 707 (KRVRPRMRLRTVKKTRPP) show a composition bias toward basic residues.

In terms of assembly, interacts with olfml3/ont1. Zn(2+) is required as a cofactor. In terms of processing, proteolytically activated in the trans-Golgi network by furin-like/paired basic proprotein convertases, cleavage is not required for secretion.

It is found in the golgi apparatus. The protein localises to the trans-Golgi network. Its subcellular location is the secreted. The protein resides in the extracellular space. It localises to the extracellular matrix. Metalloprotease involved in pattern formation in gastrula and later differentiation of developing organs. Able to cleave chordin (chrd), suggesting that it may act in dorsoventral patterning during early development by regulating the chordin (chrd) activity. This chain is Bone morphogenetic protein 1 (bmp1), found in Xenopus laevis (African clawed frog).